Here is a 394-residue protein sequence, read N- to C-terminus: Probable acetyl-CoA acyltransferase (394 aa).

Residue Cys88 is the Acyl-thioester intermediate of the active site. Active-site proton acceptor residues include His349 and Cys378.

The protein belongs to the thiolase-like superfamily. Thiolase family.

The protein resides in the cytoplasm. The enzyme catalyses 2 acetyl-CoA = acetoacetyl-CoA + CoA. This is Probable acetyl-CoA acyltransferase from Staphylococcus epidermidis (strain ATCC 35984 / DSM 28319 / BCRC 17069 / CCUG 31568 / BM 3577 / RP62A).